Reading from the N-terminus, the 351-residue chain is tRNA-specific 2-thiouridylase MnmA 2 (351 aa).

Residues 13-20 (GMSGGTDS) and Phe39 contribute to the ATP site. Cys98 serves as the catalytic Nucleophile. A disulfide bond links Cys98 and Cys195. Gly122 is an ATP binding site. Residues 144 to 146 (KDQ) form an interaction with tRNA region. The active-site Cysteine persulfide intermediate is Cys195. Residues 301–302 (RY) form an interaction with tRNA region.

Belongs to the MnmA/TRMU family.

It is found in the cytoplasm. The enzyme catalyses S-sulfanyl-L-cysteinyl-[protein] + uridine(34) in tRNA + AH2 + ATP = 2-thiouridine(34) in tRNA + L-cysteinyl-[protein] + A + AMP + diphosphate + H(+). In terms of biological role, catalyzes the 2-thiolation of uridine at the wobble position (U34) of tRNA, leading to the formation of s(2)U34. The protein is tRNA-specific 2-thiouridylase MnmA 2 of Phocaeicola vulgatus (strain ATCC 8482 / DSM 1447 / JCM 5826 / CCUG 4940 / NBRC 14291 / NCTC 11154) (Bacteroides vulgatus).